The sequence spans 567 residues: GBF-interacting protein 1 (567 aa).

3 disordered regions span residues 70-150 (ERKK…PSGI), 164-192 (DKVD…SKES), and 545-567 (PIGP…GNNY). 2 stretches are compositionally biased toward polar residues: residues 91-102 (FASSYTDASNGR) and 121-136 (TASS…TKPS). Basic and acidic residues predominate over residues 182 to 191 (DVVEPDKSKE). Residues 550 to 567 (HVTNQQPQAARTNLGNNY) are compositionally biased toward polar residues.

The protein belongs to the GIP1 family. In terms of assembly, monomer, homodimer, homooligomer. Under non-reducing conditions, predominantly present in high molecular weight forms, but predominates in low molecular weight monomers under reducing conditions. Interacts with BZIP16, BZIP68 and GBF1. Interacts with LBD18. As to expression, expressed in roots, leaves, stems and flowers.

The protein localises to the nucleus. Functionally, plant specific protein that enhances G-box-binding factor (GBF) DNA binding activity. May function as a nuclear chaperone or lever and regulate the multimeric state of GBFs. May contribute to bZIP-mediated gene regulation. Is able to refold denatured rhodanese in vitro. Reduces DNA-binding activity of BZIP16, BZIP68 and GBF1 under non-reducing conditions through direct physical interaction. Acts as a negative co-regulator in red and blue light-mediated hypocotyl elongation. Functions to promote hypocotyl elongation during the early stages of seedling development by regulating the repression effect by BZIP16 and the activation effect by BZIP68 and GBF1 on LHCB2.4 expression. Enhances transcriptional activity of LBD18 in the EXP14 promoter. May act as a transcriptional coactivator of LBD18. The protein is GBF-interacting protein 1 of Arabidopsis thaliana (Mouse-ear cress).